The chain runs to 510 residues: Maturase K (510 aa).

The protein belongs to the intron maturase 2 family. MatK subfamily.

It localises to the plastid. The protein localises to the chloroplast. Its function is as follows. Usually encoded in the trnK tRNA gene intron. Probably assists in splicing its own and other chloroplast group II introns. The chain is Maturase K from Gratiola officinalis (Hedgehyssop).